Consider the following 223-residue polypeptide: Dephospho-CoA kinase (223 aa).

Residues 3–204 (VFGLSGGAGS…AGRHRFRVAR (202 aa)) form the DPCK domain. Residue 11–16 (GSGKST) participates in ATP binding.

The protein belongs to the CoaE family.

The protein resides in the cytoplasm. It catalyses the reaction 3'-dephospho-CoA + ATP = ADP + CoA + H(+). It participates in cofactor biosynthesis; coenzyme A biosynthesis; CoA from (R)-pantothenate: step 5/5. Catalyzes the phosphorylation of the 3'-hydroxyl group of dephosphocoenzyme A to form coenzyme A. The polypeptide is Dephospho-CoA kinase (Anaplasma marginale (strain St. Maries)).